The chain runs to 149 residues: Transcriptional repressor NrdR (149 aa).

A zinc finger spans residues 3–34; it reads CPFCSHSETQVVETRISEDGDSIRRRRQCASC. The 91-residue stretch at 49-139 folds into the ATP-cone domain; it reads PAIVKKDGRR…VYRSFEDIDE (91 aa).

It belongs to the NrdR family. Requires Zn(2+) as cofactor.

Functionally, negatively regulates transcription of bacterial ribonucleotide reductase nrd genes and operons by binding to NrdR-boxes. The protein is Transcriptional repressor NrdR of Albidiferax ferrireducens (strain ATCC BAA-621 / DSM 15236 / T118) (Rhodoferax ferrireducens).